The primary structure comprises 119 residues: Movement protein TGB2 (119 aa).

Over 1-13 the chain is Cytoplasmic; that stretch reads MVRNNEIGARPNK. A helical membrane pass occupies residues 14 to 34; the sequence is YWPVVAAVVAICLFGFLTVTN. The Lumenal portion of the chain corresponds to 35–79; the sequence is QKHATQSGDNIHKFANGGQYRDGSKSIKYNCNNPRAYNGSSSNIT. The helical transmembrane segment at 80–100 threads the bilayer; the sequence is FSQLFLPVLLIGAALYAYLWF. The Cytoplasmic segment spans residues 101 to 119; it reads TRPDCSVTCRGDCCRSYGG.

The protein belongs to the virgaviridae/benyvirus TGB2 movement protein family. Interacts with movement protein TGB3. TGB1-TGB3-TGB2 complex formation is enhanced by ATP hydrolysis.

The protein localises to the host cell junction. The protein resides in the host plasmodesma. It localises to the host endoplasmic reticulum membrane. It is found in the host cytoplasm. Its subcellular location is the host cytoskeleton. The protein localises to the host chloroplast envelope. Functionally, participates in the transport of viral genome to neighboring plant cells directly through plasmodesmata, without any budding. TGBp2 and TGBp3 are necessary for intracellular delivery of TGBp1-containing vRNPs to plasmodesmata. Can gate plasmodesmata and increase their size exclusion limit. To a lesser extent than TGB3, induces host actin cytoskeleton network thickening, which probably plays a major role in virus cell-to-cell movement. Binds ssRNA in a sequence non-specific manner. This chain is Movement protein TGB2, found in Potato mop-top virus (isolate Potato/Sweden/Sw) (PMTV).